A 257-amino-acid chain; its full sequence is OCIA domain-containing protein 1 (257 aa).

Disordered stretches follow at residues M1–L20 and Y148–D257. In terms of domain architecture, OCIA spans M1 to E110. Residues G156–T170 are compositionally biased toward polar residues. Over residues E204–K216 the composition is skewed to basic and acidic residues.

Belongs to the OCIAD1 family. Interacts with STAT3 and ARF1. As to expression, expressed in all cells of the primary lymph gland lobe.

It localises to the endosome. Functionally, maintains stem cell potency. Involved in endocytic pathways that mediate signaling during hematopoiesis. The polypeptide is OCIA domain-containing protein 1 (asrij) (Drosophila melanogaster (Fruit fly)).